The following is a 696-amino-acid chain: DNA ligase (696 aa).

NAD(+) is bound by residues 36–40 (DAVYD), 85–86 (SL), and Glu-124. The N6-AMP-lysine intermediate role is filled by Lys-126. Residues Arg-147, Glu-184, Lys-308, and Lys-332 each coordinate NAD(+). Residues Cys-426, Cys-429, Cys-444, and Cys-449 each coordinate Zn(2+). One can recognise a BRCT domain in the interval 618 to 696 (QRTVSLQGQT…EEELLKLLAS (79 aa)).

The protein belongs to the NAD-dependent DNA ligase family. LigA subfamily. Requires Mg(2+) as cofactor. Mn(2+) serves as cofactor.

The catalysed reaction is NAD(+) + (deoxyribonucleotide)n-3'-hydroxyl + 5'-phospho-(deoxyribonucleotide)m = (deoxyribonucleotide)n+m + AMP + beta-nicotinamide D-nucleotide.. Functionally, DNA ligase that catalyzes the formation of phosphodiester linkages between 5'-phosphoryl and 3'-hydroxyl groups in double-stranded DNA using NAD as a coenzyme and as the energy source for the reaction. It is essential for DNA replication and repair of damaged DNA. The protein is DNA ligase of Prochlorococcus marinus (strain MIT 9303).